A 283-amino-acid polypeptide reads, in one-letter code: SNF1-related protein kinase regulatory subunit beta-1 (283 aa).

A compositionally biased stretch (basic and acidic residues) spans 1 to 10; it reads MGNANGKDED. Residues 1–63 are disordered; that stretch reads MGNANGKDED…PARSPSPFLF (63 aa). The N-myristoyl glycine moiety is linked to residue Gly2. Over residues 43–60 the composition is skewed to low complexity; sequence SDSMSSSPPGSPARSPSP. A kinase-interacting sequence (KIS) region spans residues 101–178; the sequence is PTIITWNQGG…VGNVCNILDV (78 aa). The interval 215–283 is association with SNF1 complex (ASC); it reads EPLAVPPQLH…TVVLYKPLTR (69 aa).

It belongs to the 5'-AMP-activated protein kinase beta subunit family. As to quaternary structure, subunit of a probable heterotrimeric complex consisting of an alpha catalytic (KIN10 or KIN11) subunit, and a beta (KINB) and a gamma (KING or SNF4) non-catalytic regulatory subunits. Interacts with SNF4 and CBL1. Interacts with FLZ1, FLZ2, FLZ8, FLZ9, FLZ10, FLZ12, FLZ13, FLZ14 and FLZ15. In terms of processing, sumoylated by SIZ1. As to expression, expressed in vegetative organs and, to lower extent, in reproductive organs.

It localises to the cell membrane. Functionally, regulatory subunit of the probable trimeric SNF1-related protein kinase (SnRK) complex, which may play a role in a signal transduction cascade regulating gene expression and carbohydrate metabolism in higher plants. The SnRK complex may also be involved in the regulation of fatty acid synthesis by phosphorylation of acetyl-CoA carboxylase and in assimilation of nitrogen by phosphorylating nitrate reductase. The sequence is that of SNF1-related protein kinase regulatory subunit beta-1 (KINB1) from Arabidopsis thaliana (Mouse-ear cress).